Reading from the N-terminus, the 350-residue chain is Protein-glutamate methylesterase/protein-glutamine glutaminase (350 aa).

A Response regulatory domain is found at Thr-5–Leu-122. 4-aspartylphosphate is present on Asp-56. Positions Leu-153 to Gly-345 constitute a CheB-type methylesterase domain. Catalysis depends on residues Ser-165, His-191, and Asp-287.

Belongs to the CheB family. Post-translationally, phosphorylated by CheA. Phosphorylation of the N-terminal regulatory domain activates the methylesterase activity.

Its subcellular location is the cytoplasm. It catalyses the reaction [protein]-L-glutamate 5-O-methyl ester + H2O = L-glutamyl-[protein] + methanol + H(+). The enzyme catalyses L-glutaminyl-[protein] + H2O = L-glutamyl-[protein] + NH4(+). Functionally, involved in chemotaxis. Part of a chemotaxis signal transduction system that modulates chemotaxis in response to various stimuli. Catalyzes the demethylation of specific methylglutamate residues introduced into the chemoreceptors (methyl-accepting chemotaxis proteins or MCP) by CheR. Also mediates the irreversible deamidation of specific glutamine residues to glutamic acid. The polypeptide is Protein-glutamate methylesterase/protein-glutamine glutaminase (Photorhabdus laumondii subsp. laumondii (strain DSM 15139 / CIP 105565 / TT01) (Photorhabdus luminescens subsp. laumondii)).